The sequence spans 404 residues: Formate-dependent phosphoribosylglycinamide formyltransferase (404 aa).

Residues 25 to 26 (EL) and E85 contribute to the N(1)-(5-phospho-beta-D-ribosyl)glycinamide site. ATP-binding positions include R118, K159, 164 to 169 (SSGKGQ), 199 to 202 (EGFI), and E207. The ATP-grasp domain maps to 123–318 (RLAAEELGLA…EFELHARAIL (196 aa)). Mg(2+) is bound by residues E277 and E289. N(1)-(5-phospho-beta-D-ribosyl)glycinamide contacts are provided by residues D296, K365, and 372–373 (RR).

Belongs to the PurK/PurT family. As to quaternary structure, homodimer.

It carries out the reaction N(1)-(5-phospho-beta-D-ribosyl)glycinamide + formate + ATP = N(2)-formyl-N(1)-(5-phospho-beta-D-ribosyl)glycinamide + ADP + phosphate + H(+). The protein operates within purine metabolism; IMP biosynthesis via de novo pathway; N(2)-formyl-N(1)-(5-phospho-D-ribosyl)glycinamide from N(1)-(5-phospho-D-ribosyl)glycinamide (formate route): step 1/1. Involved in the de novo purine biosynthesis. Catalyzes the transfer of formate to 5-phospho-ribosyl-glycinamide (GAR), producing 5-phospho-ribosyl-N-formylglycinamide (FGAR). Formate is provided by PurU via hydrolysis of 10-formyl-tetrahydrofolate. The polypeptide is Formate-dependent phosphoribosylglycinamide formyltransferase (Burkholderia vietnamiensis (strain G4 / LMG 22486) (Burkholderia cepacia (strain R1808))).